A 146-amino-acid chain; its full sequence is MNPRRKKRLGLILALVLGASATVGLMLYALNQNMDLFYTPTELVNGKPDGTKPEVGQRLRIGGMVVVGSVKRDSQSLEVRFQVEDIGPKVTVIYDGILPDLFREGQGIVAQGVLVDATTVKAHEVLAKHDEEYMPPEVAEAMKKTH.

The Cytoplasmic segment spans residues 1-8 (MNPRRKKR). Residues 9-29 (LGLILALVLGASATVGLMLYA) form a helical; Signal-anchor for type II membrane protein membrane-spanning segment. Residues 30 to 146 (LNQNMDLFYT…EVAEAMKKTH (117 aa)) are Periplasmic-facing. Heme contacts are provided by His129 and Tyr133.

This sequence belongs to the CcmE/CycJ family.

It is found in the cell inner membrane. In terms of biological role, heme chaperone required for the biogenesis of c-type cytochromes. Transiently binds heme delivered by CcmC and transfers the heme to apo-cytochromes in a process facilitated by CcmF and CcmH. The chain is Cytochrome c-type biogenesis protein CcmE from Aliivibrio salmonicida (strain LFI1238) (Vibrio salmonicida (strain LFI1238)).